A 145-amino-acid polypeptide reads, in one-letter code: D-aminoacyl-tRNA deacylase (145 aa).

Residues Gly-137–Pro-138 carry the Gly-cisPro motif, important for rejection of L-amino acids motif.

This sequence belongs to the DTD family. As to quaternary structure, homodimer.

The protein resides in the cytoplasm. It carries out the reaction glycyl-tRNA(Ala) + H2O = tRNA(Ala) + glycine + H(+). The enzyme catalyses a D-aminoacyl-tRNA + H2O = a tRNA + a D-alpha-amino acid + H(+). An aminoacyl-tRNA editing enzyme that deacylates mischarged D-aminoacyl-tRNAs. Also deacylates mischarged glycyl-tRNA(Ala), protecting cells against glycine mischarging by AlaRS. Acts via tRNA-based rather than protein-based catalysis; rejects L-amino acids rather than detecting D-amino acids in the active site. By recycling D-aminoacyl-tRNA to D-amino acids and free tRNA molecules, this enzyme counteracts the toxicity associated with the formation of D-aminoacyl-tRNA entities in vivo and helps enforce protein L-homochirality. The protein is D-aminoacyl-tRNA deacylase of Alteromonas mediterranea (strain DSM 17117 / CIP 110805 / LMG 28347 / Deep ecotype).